Reading from the N-terminus, the 203-residue chain is Recombination protein RecR (203 aa).

The segment at 56 to 71 (CSVCGNVSDEERCRIC) adopts a C4-type zinc-finger fold. Residues 79-179 (SLVCVVEEPK…TVTRIASGLP (101 aa)) enclose the Toprim domain.

Belongs to the RecR family.

In terms of biological role, may play a role in DNA repair. It seems to be involved in an RecBC-independent recombinational process of DNA repair. It may act with RecF and RecO. The chain is Recombination protein RecR from Mycolicibacterium smegmatis (strain ATCC 700084 / mc(2)155) (Mycobacterium smegmatis).